We begin with the raw amino-acid sequence, 89 residues long: Small ribosomal subunit protein uS15 (89 aa).

Belongs to the universal ribosomal protein uS15 family. In terms of assembly, part of the 30S ribosomal subunit. Forms a bridge to the 50S subunit in the 70S ribosome, contacting the 23S rRNA.

One of the primary rRNA binding proteins, it binds directly to 16S rRNA where it helps nucleate assembly of the platform of the 30S subunit by binding and bridging several RNA helices of the 16S rRNA. In terms of biological role, forms an intersubunit bridge (bridge B4) with the 23S rRNA of the 50S subunit in the ribosome. The sequence is that of Small ribosomal subunit protein uS15 from Photobacterium profundum (strain SS9).